We begin with the raw amino-acid sequence, 306 residues long: MSTLGHQYDNSLVSNAFGFLRLPLNFQPYDSDADWVITGVPFDMATSGRAGGRHGPAAIRQVSTNLAWEHNRFPWNFDMRERLNVVDCGDLVYAFGDAREMSEKLQAHAEKLLSAGKRMLSFGGDHFVTLPLLRAHAKHFGKMALVHFDAHTDTYANGCEFDHGTMFYTAPKEGLIDPNHSVQIGIRTEFDKDNGFTVLDACQVNDRGVDDIIAQVNQIVGDMPVYLTFDIDCLDPAFAPGTGTPVIGGLTSDRAIKLVRGLKDLNIVGMDVVEVAPAYDQSEITALAAATLALEMLYIQAAKKGE.

H126, D149, H151, D153, D230, and D232 together coordinate Mn(2+).

Belongs to the arginase family. Agmatinase subfamily. Requires Mn(2+) as cofactor.

The enzyme catalyses agmatine + H2O = urea + putrescine. Its pathway is amine and polyamine biosynthesis; putrescine biosynthesis via agmatine pathway; putrescine from agmatine: step 1/1. In terms of biological role, catalyzes the formation of putrescine from agmatine. The chain is Agmatinase from Citrobacter koseri (strain ATCC BAA-895 / CDC 4225-83 / SGSC4696).